A 1013-amino-acid polypeptide reads, in one-letter code: EF-hand calcium-binding domain-containing protein 6 (1013 aa).

EF-hand domains lie at 20-55, 145-180, 251-286, 287-322, and 352-387; these read KNIK…FCLK, KSYE…FIYQ, DRSA…VAIK, LSDS…NCRM, and RNLQ…FCPF. Residues 441 to 460 are disordered; it reads QKDEQQQPDLSERTKPTEDK. EF-hand domains are found at residues 482-517, 589-624, 695-730, 731-766, 812-847, and 917-952; these read QQDP…TGMP, ESFR…LLLN, NRWS…FDIP, LTPR…NYSP, DLHQ…CGCS, and SSQL…FCYK. Aspartate 602, aspartate 604, aspartate 606, and aspartate 613 together coordinate Ca(2+). Threonine 732 is modified (phosphothreonine).

As to quaternary structure, microtubule inner protein component of sperm flagellar doublet microtubules. Binds PARK7. Part of a ternary complex containing PARK7, EFCAB6/DJBP and AR.

It localises to the nucleus. The protein resides in the cytoplasm. The protein localises to the cytoskeleton. Its subcellular location is the flagellum axoneme. Its function is as follows. Negatively regulates the androgen receptor by recruiting histone deacetylase complex, and protein DJ-1 antagonizes this inhibition by abrogation of this complex. Microtubule inner protein (MIP) part of the dynein-decorated doublet microtubules (DMTs) in cilia axoneme, which is required for motile cilia beating. The chain is EF-hand calcium-binding domain-containing protein 6 (EFCAB6) from Pongo abelii (Sumatran orangutan).